The sequence spans 245 residues: 2,3-bisphosphoglycerate-dependent phosphoglycerate mutase (245 aa).

Residues 8–15 (RHGQSLWN), 21–22 (TG), arginine 60, 87–90 (ERHY), lysine 98, 114–115 (RR), and 183–184 (GN) contribute to the substrate site. Histidine 9 (tele-phosphohistidine intermediate) is an active-site residue. The Proton donor/acceptor role is filled by glutamate 87.

It belongs to the phosphoglycerate mutase family. BPG-dependent PGAM subfamily.

It carries out the reaction (2R)-2-phosphoglycerate = (2R)-3-phosphoglycerate. The protein operates within carbohydrate degradation; glycolysis; pyruvate from D-glyceraldehyde 3-phosphate: step 3/5. In terms of biological role, catalyzes the interconversion of 2-phosphoglycerate and 3-phosphoglycerate. This is 2,3-bisphosphoglycerate-dependent phosphoglycerate mutase from Bacillus cytotoxicus (strain DSM 22905 / CIP 110041 / 391-98 / NVH 391-98).